The primary structure comprises 135 residues: Galectin-1 (135 aa).

The residue at position 2 (A2) is an N-acetylalanine. Residues 4-135 form the Galectin domain; sequence GLVASNLNLK…DFKIKCVAFE (132 aa). An N6-acetyllysine mark is found at K13, K19, and K29. Phosphoserine is present on S30. A beta-D-galactoside contacts are provided by residues 45–49, H53, N62, and 69–72; these read HFNPR and WGTE. An N6-acetyllysine; alternate modification is found at K108. K108 carries the post-translational modification N6-succinyllysine; alternate. At K128 the chain carries N6-acetyllysine.

As to quaternary structure, homodimer. Binds LGALS3BP. Interacts with CD2, CD3, CD4, CD6, CD7, CD43, ALCAM and CD45. Interacts with laminin (via poly-N-acetyllactosamine). Interacts with SUSD2. Interacts with cargo receptor TMED10; the interaction mediates the translocation from the cytoplasm into the ERGIC (endoplasmic reticulum-Golgi intermediate compartment) and thereby secretion. Interacts with CD69.

Its subcellular location is the secreted. The protein resides in the extracellular space. It localises to the extracellular matrix. The protein localises to the cytoplasm. Functionally, lectin that binds beta-galactoside and a wide array of complex carbohydrates. Plays a role in regulating apoptosis, cell proliferation and cell differentiation. Inhibits CD45 protein phosphatase activity and therefore the dephosphorylation of Lyn kinase. Strong inducer of T-cell apoptosis. Plays a negative role in Th17 cell differentiation via activation of the receptor CD69. This Rattus norvegicus (Rat) protein is Galectin-1 (Lgals1).